The chain runs to 342 residues: Phosphoribosylformylglycinamidine cyclo-ligase (342 aa).

It belongs to the AIR synthase family.

It localises to the cytoplasm. The enzyme catalyses 2-formamido-N(1)-(5-O-phospho-beta-D-ribosyl)acetamidine + ATP = 5-amino-1-(5-phospho-beta-D-ribosyl)imidazole + ADP + phosphate + H(+). It participates in purine metabolism; IMP biosynthesis via de novo pathway; 5-amino-1-(5-phospho-D-ribosyl)imidazole from N(2)-formyl-N(1)-(5-phospho-D-ribosyl)glycinamide: step 2/2. The polypeptide is Phosphoribosylformylglycinamidine cyclo-ligase (Staphylococcus aureus (strain USA300)).